The sequence spans 189 residues: ATP synthase subunit b (189 aa).

A helical membrane pass occupies residues 38–58; that stretch reads PMFLATLIAFILVVLILWFLL.

Belongs to the ATPase B chain family. In terms of assembly, F-type ATPases have 2 components, F(1) - the catalytic core - and F(0) - the membrane proton channel. F(1) has five subunits: alpha(3), beta(3), gamma(1), delta(1), epsilon(1). F(0) has three main subunits: a(1), b(2) and c(10-14). The alpha and beta chains form an alternating ring which encloses part of the gamma chain. F(1) is attached to F(0) by a central stalk formed by the gamma and epsilon chains, while a peripheral stalk is formed by the delta and b chains.

It localises to the cell membrane. In terms of biological role, f(1)F(0) ATP synthase produces ATP from ADP in the presence of a proton or sodium gradient. F-type ATPases consist of two structural domains, F(1) containing the extramembraneous catalytic core and F(0) containing the membrane proton channel, linked together by a central stalk and a peripheral stalk. During catalysis, ATP synthesis in the catalytic domain of F(1) is coupled via a rotary mechanism of the central stalk subunits to proton translocation. Component of the F(0) channel, it forms part of the peripheral stalk, linking F(1) to F(0). This chain is ATP synthase subunit b, found in Mycoplasmopsis agalactiae (strain NCTC 10123 / CIP 59.7 / PG2) (Mycoplasma agalactiae).